Consider the following 235-residue polypeptide: Large ribosomal subunit protein uL3 (235 aa).

The interval 138 to 157 (SVSHRSHGSTGGRQDPGKTF) is disordered. N5-methylglutamine is present on Gln-151.

Belongs to the universal ribosomal protein uL3 family. As to quaternary structure, part of the 50S ribosomal subunit. Forms a cluster with proteins L14 and L19. Post-translationally, methylated by PrmB.

Functionally, one of the primary rRNA binding proteins, it binds directly near the 3'-end of the 23S rRNA, where it nucleates assembly of the 50S subunit. This is Large ribosomal subunit protein uL3 from Rhodospirillum centenum (strain ATCC 51521 / SW).